The following is an 80-amino-acid chain: MITKNYLIDKIHDKLNYLSKEDVKDSVDLILDYLNESLKQQKRIEIRNFGNFSIRKRKFPESEKFYNTVYYRMPKNLFKE.

This sequence belongs to the bacterial histone-like protein family.

In terms of biological role, histone-like DNA-binding protein which is capable of wrapping DNA to stabilize it, and thus to prevent its denaturation under extreme environmental conditions. This Rickettsia rickettsii (strain Sheila Smith) protein is DNA-binding protein HU-like.